Reading from the N-terminus, the 338-residue chain is DNA-directed RNA polymerase subunit alpha (338 aa).

The alpha N-terminal domain (alpha-NTD) stretch occupies residues 1 to 234; that stretch reads MIERNWNELI…DQLQIFITFE (234 aa). The alpha C-terminal domain (alpha-CTD) stretch occupies residues 250–338; that stretch reads FNPALLKKVD…DLAKKFEDQI (89 aa).

The protein belongs to the RNA polymerase alpha chain family. Homodimer. The RNAP catalytic core consists of 2 alpha, 1 beta, 1 beta' and 1 omega subunit. When a sigma factor is associated with the core the holoenzyme is formed, which can initiate transcription.

The catalysed reaction is RNA(n) + a ribonucleoside 5'-triphosphate = RNA(n+1) + diphosphate. Functionally, DNA-dependent RNA polymerase catalyzes the transcription of DNA into RNA using the four ribonucleoside triphosphates as substrates. This chain is DNA-directed RNA polymerase subunit alpha, found in Caulobacter vibrioides (strain ATCC 19089 / CIP 103742 / CB 15) (Caulobacter crescentus).